A 220-amino-acid chain; its full sequence is Adenylate kinase (220 aa).

10 to 15 (GAGKGT) contributes to the ATP binding site. The interval 30–59 (STGDMLRAAVKAGTPLGVEAKTYMDEGKLV) is NMP. AMP contacts are provided by residues Thr31, Arg36, 57 to 59 (KLV), 85 to 88 (GFPR), and Gln92. The segment at 122 to 159 (GRRTHPASGRTYHVKFNPPKVEGKDDVTGEPLVQRDDD) is LID. ATP-binding positions include Arg123 and 132-133 (TY). Arg156 and Arg167 together coordinate AMP. Gly206 is an ATP binding site.

The protein belongs to the adenylate kinase family. As to quaternary structure, monomer.

The protein resides in the cytoplasm. It catalyses the reaction AMP + ATP = 2 ADP. The protein operates within purine metabolism; AMP biosynthesis via salvage pathway; AMP from ADP: step 1/1. Its function is as follows. Catalyzes the reversible transfer of the terminal phosphate group between ATP and AMP. Plays an important role in cellular energy homeostasis and in adenine nucleotide metabolism. The polypeptide is Adenylate kinase (Burkholderia mallei (strain NCTC 10247)).